The primary structure comprises 225 residues: Ribosome maturation factor RimM (225 aa).

The PRC barrel domain occupies Ala144–Tyr225.

The protein belongs to the RimM family. Binds ribosomal protein uS19.

The protein localises to the cytoplasm. An accessory protein needed during the final step in the assembly of 30S ribosomal subunit, possibly for assembly of the head region. Essential for efficient processing of 16S rRNA. May be needed both before and after RbfA during the maturation of 16S rRNA. It has affinity for free ribosomal 30S subunits but not for 70S ribosomes. The chain is Ribosome maturation factor RimM from Burkholderia lata (strain ATCC 17760 / DSM 23089 / LMG 22485 / NCIMB 9086 / R18194 / 383).